Here is a 324-residue protein sequence, read N- to C-terminus: HPr kinase/phosphorylase (324 aa).

Residues His146 and Lys167 contribute to the active site. 161 to 168 (GDSGLGKS) is an ATP binding site. Residue Ser168 coordinates Mg(2+). Asp185 serves as the catalytic Proton acceptor; for phosphorylation activity. Proton donor; for dephosphorylation activity. The segment at 209–218 (LEVRGLGLLD) is important for the catalytic mechanism of both phosphorylation and dephosphorylation. Glu210 serves as a coordination point for Mg(2+). Arg250 is a catalytic residue. Residues 271 to 276 (QVAAGR) are important for the catalytic mechanism of dephosphorylation.

It belongs to the HPrK/P family. As to quaternary structure, homohexamer. Requires Mg(2+) as cofactor.

The enzyme catalyses [HPr protein]-L-serine + ATP = [HPr protein]-O-phospho-L-serine + ADP + H(+). The catalysed reaction is [HPr protein]-O-phospho-L-serine + phosphate + H(+) = [HPr protein]-L-serine + diphosphate. Its function is as follows. Catalyzes the ATP- as well as the pyrophosphate-dependent phosphorylation of a specific serine residue in HPr, a phosphocarrier protein of the phosphoenolpyruvate-dependent sugar phosphotransferase system (PTS). HprK/P also catalyzes the pyrophosphate-producing, inorganic phosphate-dependent dephosphorylation (phosphorolysis) of seryl-phosphorylated HPr (P-Ser-HPr). The chain is HPr kinase/phosphorylase from Ralstonia pickettii (strain 12J).